A 527-amino-acid polypeptide reads, in one-letter code: Protein SDS24 (527 aa).

Composition is skewed to low complexity over residues 1-22 (MAST…LPTS) and 55-74 (TPPT…TPAP). The segment at 1-75 (MASTSNTFPP…PGCAATPAPL (75 aa)) is disordered. Position 94 is a phosphoserine (Ser94). CBS domains are found at residues 114 to 175 (IEQN…KITV), 198 to 256 (LTPK…NARS), 283 to 342 (TSRQ…QYPL), and 443 to 512 (LNSH…GNKE). The segment covering 424 to 447 (AQSSANGATPMSKSSSSTSLNSHS) has biased composition (low complexity). Disordered stretches follow at residues 424 to 478 (AQSS…TNTP) and 508 to 527 (TGNK…SIAM). A phosphoserine mark is found at Ser458 and Ser524.

This sequence belongs to the SDS23 family.

The protein localises to the cytoplasm. The protein resides in the nucleus. In terms of biological role, involved in DNA replication and cell separation during budding. This chain is Protein SDS24 (SDS24), found in Saccharomyces cerevisiae (strain YJM789) (Baker's yeast).